We begin with the raw amino-acid sequence, 447 residues long: Phosphoglucosamine mutase (447 aa).

Ser103 serves as the catalytic Phosphoserine intermediate. Positions 103, 242, 244, and 246 each coordinate Mg(2+). At Ser103 the chain carries Phosphoserine.

This sequence belongs to the phosphohexose mutase family. Mg(2+) is required as a cofactor. Activated by phosphorylation.

The enzyme catalyses alpha-D-glucosamine 1-phosphate = D-glucosamine 6-phosphate. Functionally, catalyzes the conversion of glucosamine-6-phosphate to glucosamine-1-phosphate. The polypeptide is Phosphoglucosamine mutase (Jannaschia sp. (strain CCS1)).